Consider the following 730-residue polypeptide: Elongation factor 2 (730 aa).

A tr-type G domain is found at aspartate 19–leucine 260. GTP contacts are provided by residues alanine 28–threonine 35, aspartate 94–histidine 98, and asparagine 148–aspartate 151. Position 597 is a diphthamide (histidine 597).

Belongs to the TRAFAC class translation factor GTPase superfamily. Classic translation factor GTPase family. EF-G/EF-2 subfamily.

It is found in the cytoplasm. Functionally, catalyzes the GTP-dependent ribosomal translocation step during translation elongation. During this step, the ribosome changes from the pre-translocational (PRE) to the post-translocational (POST) state as the newly formed A-site-bound peptidyl-tRNA and P-site-bound deacylated tRNA move to the P and E sites, respectively. Catalyzes the coordinated movement of the two tRNA molecules, the mRNA and conformational changes in the ribosome. This Methanoculleus marisnigri (strain ATCC 35101 / DSM 1498 / JR1) protein is Elongation factor 2.